Consider the following 517-residue polypeptide: Beta-glucosidase 17 (517 aa).

The N-terminal stretch at 1 to 23 is a signal peptide; the sequence is MAIKSIFIIIIISIITSISELYA. Residues Gln54, His158, and 203–204 each bind a beta-D-glucoside; that span reads NE. Glu204 functions as the Proton donor in the catalytic mechanism. Cys223 and Cys230 form a disulfide bridge. N-linked (GlcNAc...) asparagine glycosylation is present at Asn229. Tyr346 provides a ligand contact to a beta-D-glucoside. N-linked (GlcNAc...) asparagine glycosylation is found at Asn361 and Asn371. A beta-D-glucoside is bound by residues Glu417, Trp466, 473–474, and Tyr482; that span reads EW. The active-site Nucleophile is Glu417. Asn510 is a glycosylation site (N-linked (GlcNAc...) asparagine).

It belongs to the glycosyl hydrolase 1 family.

It catalyses the reaction Hydrolysis of terminal, non-reducing beta-D-glucosyl residues with release of beta-D-glucose.. The sequence is that of Beta-glucosidase 17 from Arabidopsis thaliana (Mouse-ear cress).